We begin with the raw amino-acid sequence, 1585 residues long: Maestro heat-like repeat-containing protein family member 2B (1585 aa).

15 HEAT repeats span residues 28–65, 228–263, 272–309, 310–346, 405–445, 531–569, 572–611, 662–699, 777–819, 964–1001, 1021–1059, 1112–1151, 1157–1195, 1258–1295, and 1363–1402; these read VNKE…DMRD, GYAL…AAVL, LRRS…LAHS, NPGE…ADEP, TLNR…LVIG, IGLL…STVL, TMLL…NSTE, ENHL…LTKT, SYKE…LKPQ, HLEV…KFIP, PTCT…HMPV, ASSG…VISM, GLYP…QGEQ, GVIL…EPIL, and CESL…EQDD.

As to quaternary structure, found in a complex at least composed of MROH2B, PRKACA isoform 2 and TCP11. Interacts with PRKACA. Interacts with TCP11. In terms of processing, constitutively phosphorylated on serine and threonine residues in acrosomal region of the sperm head, midpiece and flagellar regions of noncapacitated spermatozoa. Phosphorylation on tyrosine residues increases upon sperm capacitation within the acrosomal and tail regions in a protein kinase A (PKA)-dependent signaling pathway.

It localises to the cytoplasm. It is found in the cytoplasmic vesicle. Its subcellular location is the secretory vesicle. The protein localises to the acrosome. The protein resides in the cell projection. It localises to the cilium. It is found in the flagellum. In terms of biological role, may play a role in the process of sperm capacitation. This chain is Maestro heat-like repeat-containing protein family member 2B, found in Homo sapiens (Human).